The sequence spans 195 residues: Granulocyte colony-stimulating factor (195 aa).

A signal peptide spans 1–21 (MKLMVLQLLLWHSALWTVHEA). Cystine bridges form between Cys-57–Cys-63 and Cys-85–Cys-95. Residue Thr-154 is glycosylated (O-linked (GalNAc...) threonine).

Belongs to the IL-6 superfamily. In terms of assembly, monomer. O-glycosylated.

It is found in the secreted. Its function is as follows. Granulocyte/macrophage colony-stimulating factors are cytokines that act in hematopoiesis by controlling the production, differentiation, and function of 2 related white cell populations of the blood, the granulocytes and the monocytes-macrophages. This CSF induces granulocytes. This Bos taurus (Bovine) protein is Granulocyte colony-stimulating factor (CSF3).